The chain runs to 161 residues: Large ribosomal subunit protein mL50 (161 aa).

The tract at residues 27–51 (WGGHSKKEEKEVEENSIIPQEKKEP) is disordered.

It belongs to the mitochondrion-specific ribosomal protein mL50 family. Component of the mitochondrial ribosome large subunit (39S) which comprises a 16S rRNA and about 50 distinct proteins.

The protein localises to the mitochondrion. This Gallus gallus (Chicken) protein is Large ribosomal subunit protein mL50 (MRPL50).